A 301-amino-acid chain; its full sequence is dTDP-4-dehydrorhamnose reductase (301 aa).

Residues 10–12, aspartate 30, 39–40, and 63–65 contribute to the NADH site; these read GQV, DF, and AHT. Residue 11–12 coordinates NADPH; it reads QV. Residues 39–40, 63–65, and tyrosine 102 contribute to the NADPH site; these read DF and AHT. 104-105 is a binding site for dTDP-beta-L-rhamnose; that stretch reads TD. The NADH site is built by tyrosine 129 and lysine 133. 2 residues coordinate NADPH: tyrosine 129 and lysine 133. Tyrosine 129 serves as the catalytic Proton donor/acceptor. Position 155 (tryptophan 155) interacts with dTDP-beta-L-rhamnose.

The protein belongs to the dTDP-4-dehydrorhamnose reductase family. As to quaternary structure, homodimer. Mg(2+) serves as cofactor.

It carries out the reaction dTDP-beta-L-rhamnose + NADP(+) = dTDP-4-dehydro-beta-L-rhamnose + NADPH + H(+). The protein operates within carbohydrate biosynthesis; dTDP-L-rhamnose biosynthesis. Its pathway is bacterial outer membrane biogenesis; LPS O-antigen biosynthesis. In terms of biological role, involved in the biosynthesis of the dTDP-L-rhamnose which is an important component of lipopolysaccharide (LPS). Catalyzes the reduction of dTDP-6-deoxy-L-lyxo-4-hexulose to yield dTDP-L-rhamnose. RmlD uses NADH and NADPH nearly equally well. The sequence is that of dTDP-4-dehydrorhamnose reductase from Escherichia coli.